The following is a 102-amino-acid chain: uncharacterized protein (102 aa).

A helical transmembrane segment spans residues 27 to 47 (TISLVSAGLLEEIFLLFGLTF).

It localises to the membrane. This is an uncharacterized protein from Saccharomyces cerevisiae (strain ATCC 204508 / S288c) (Baker's yeast).